We begin with the raw amino-acid sequence, 456 residues long: tRNA-2-methylthio-N(6)-dimethylallyladenosine synthase (456 aa).

Residues Lys-3 to Ala-120 form the MTTase N-terminal domain. Residues Cys-12, Cys-49, Cys-83, Cys-157, Cys-161, and Cys-164 each coordinate [4Fe-4S] cluster. Residues Arg-143–Arg-377 enclose the Radical SAM core domain. A TRAM domain is found at Gln-380 to Met-447.

The protein belongs to the methylthiotransferase family. MiaB subfamily. In terms of assembly, monomer. It depends on [4Fe-4S] cluster as a cofactor.

It localises to the cytoplasm. The catalysed reaction is N(6)-dimethylallyladenosine(37) in tRNA + (sulfur carrier)-SH + AH2 + 2 S-adenosyl-L-methionine = 2-methylsulfanyl-N(6)-dimethylallyladenosine(37) in tRNA + (sulfur carrier)-H + 5'-deoxyadenosine + L-methionine + A + S-adenosyl-L-homocysteine + 2 H(+). Functionally, catalyzes the methylthiolation of N6-(dimethylallyl)adenosine (i(6)A), leading to the formation of 2-methylthio-N6-(dimethylallyl)adenosine (ms(2)i(6)A) at position 37 in tRNAs that read codons beginning with uridine. The protein is tRNA-2-methylthio-N(6)-dimethylallyladenosine synthase of Paraburkholderia phymatum (strain DSM 17167 / CIP 108236 / LMG 21445 / STM815) (Burkholderia phymatum).